The sequence spans 254 residues: Metallo-beta-lactamase type 2 (254 aa).

An N-terminal signal peptide occupies residues 1–27; sequence MMKGWMKCGLAGAVVLMASFWGGSVRA. Asp-99 contacts Zn(2+). The substrate site is built by Thr-135 and His-174. Position 193 (Cys-193) interacts with Zn(2+). Substrate contacts are provided by Lys-196 and Asn-201. His-231 is a binding site for Zn(2+).

The protein belongs to the metallo-beta-lactamase superfamily. Class-B beta-lactamase family. In terms of assembly, monomer. Zn(2+) serves as cofactor.

The protein localises to the periplasm. It catalyses the reaction a beta-lactam + H2O = a substituted beta-amino acid. With respect to regulation, competitively inhibited by mercaptophosphonate and pyridine carboxylate derivatives. Also inhibited by the binding of a second zinc ion and by chelating agents such as EDTA. Confers resistance to the different beta-lactams antibiotics (penicillin, cephalosporin and carbapenem) via the hydrolysis of the beta-lactam ring. It is able to hydrolyze penicillin and imipenem, but is much less active against cephalothin, cefotaxime, meropenem and ceftazidime. The chain is Metallo-beta-lactamase type 2 from Aeromonas hydrophila.